Consider the following 298-residue polypeptide: Max-like protein X (298 aa).

The disordered stretch occupies residues 1–63 (MTEPGASPED…PRGCREDSSH (63 aa)). Ser7 bears the Phosphoserine mark. Positions 28-37 (GRARARRGAG) are enriched in basic residues. Phosphoserine occurs at positions 45, 48, 74, 77, and 98. Residues 91–145 (SVVSRANSIGSTSASSVPNTDDEDSDYHQEAYKESYKDRRRRAHTQAEQKRRDAI) are disordered. Polar residues predominate over residues 94-109 (SRANSIGSTSASSVPN). 2 stretches are compositionally biased toward basic and acidic residues: residues 116-127 (DYHQEAYKESYK) and 135-145 (TQAEQKRRDAI). In terms of domain architecture, bHLH spans 129–187 (RRRRAHTQAEQKRRDAIKRGYDDLQTIVPTCQQQDFSIGSQKLSKAIVLQKTIDYIQFL). The interval 140–160 (KRRDAIKRGYDDLQTIVPTCQ) is leucine-zipper.

Efficient DNA binding requires dimerization with another bHLH protein. Binds DNA as a heterodimer with MAD1, MAD4, MNT, WBSCR14 and MLXIP. Can also bind DNA as a homodimer. As to expression, expressed in all tissues tested, including spleen, thymus, prostate, ovary, intestine, colon, peripheral blood leukocyte, heart, liver, skeletal muscle and kidney. Lower levels of expression in testis, brain, placenta and lung.

The protein localises to the cytoplasm. Its subcellular location is the nucleus. Functionally, transcription regulator. Forms a sequence-specific DNA-binding protein complex with MAD1, MAD4, MNT, WBSCR14 and MLXIP which recognizes the core sequence 5'-CACGTG-3'. The TCFL4-MAD1, TCFL4-MAD4, TCFL4-WBSCR14 complexes are transcriptional repressors. Plays a role in transcriptional activation of glycolytic target genes. Involved in glucose-responsive gene regulation. The polypeptide is Max-like protein X (MLX) (Homo sapiens (Human)).